The sequence spans 96 residues: uncharacterized protein (96 aa).

The CBS domain maps to 57-96; that stretch reads MTKKVRTTKKDASISDAAALMDKHNVNRLPVVDENNKLVL.

This is an uncharacterized protein from Methanobacterium ivanovii.